A 355-amino-acid chain; its full sequence is Fructose-bisphosphate aldolase, cytoplasmic isozyme (355 aa).

The substrate site is built by R52 and K142. Residue E183 is the Proton acceptor of the active site. K225 (schiff-base intermediate with dihydroxyacetone-P) is an active-site residue.

The protein belongs to the class I fructose-bisphosphate aldolase family.

Its subcellular location is the cytoplasm. The enzyme catalyses beta-D-fructose 1,6-bisphosphate = D-glyceraldehyde 3-phosphate + dihydroxyacetone phosphate. It functions in the pathway carbohydrate degradation; glycolysis; D-glyceraldehyde 3-phosphate and glycerone phosphate from D-glucose: step 4/4. This Zea mays (Maize) protein is Fructose-bisphosphate aldolase, cytoplasmic isozyme.